A 293-amino-acid chain; its full sequence is Nucleotide-binding protein BC_5156 (293 aa).

14–21 provides a ligand contact to ATP; it reads GMSGAGKT. 65–68 lines the GTP pocket; the sequence is DLRG.

The protein belongs to the RapZ-like family.

Displays ATPase and GTPase activities. This is Nucleotide-binding protein BC_5156 from Bacillus cereus (strain ATCC 14579 / DSM 31 / CCUG 7414 / JCM 2152 / NBRC 15305 / NCIMB 9373 / NCTC 2599 / NRRL B-3711).